A 514-amino-acid polypeptide reads, in one-letter code: Alanine--glyoxylate aminotransferase 2, mitochondrial (514 aa).

A mitochondrion-targeting transit peptide spans 1–41 (MTLIWRHLLRPLCLVTSAPRILEMHPFLSLGTSRTSVTKLS). N6-acetyllysine; alternate is present on Lys-71. Lys-71 is modified (N6-succinyllysine; alternate). The residue at position 84 (Lys-84) is an N6-acetyllysine. Lys-262 bears the N6-acetyllysine; alternate mark. Lys-262 is modified (N6-succinyllysine; alternate). Lys-304 bears the N6-succinyllysine mark. Lys-350 carries the N6-(pyridoxal phosphate)lysine modification. An N6-acetyllysine; alternate mark is found at Lys-417 and Lys-420. Residues Lys-417 and Lys-420 each carry the N6-succinyllysine; alternate modification.

Belongs to the class-III pyridoxal-phosphate-dependent aminotransferase family. As to quaternary structure, homotetramer. Pyridoxal 5'-phosphate serves as cofactor. In terms of tissue distribution, expressed in the convoluted tubule in the kidney and in the liver hepatocytes (at protein level).

Its subcellular location is the mitochondrion. The catalysed reaction is glyoxylate + L-alanine = glycine + pyruvate. It catalyses the reaction (R)-3-amino-2-methylpropanoate + pyruvate = 2-methyl-3-oxopropanoate + L-alanine. The enzyme catalyses 3-oxopropanoate + L-alanine = beta-alanine + pyruvate. It carries out the reaction 2-oxobutanoate + L-alanine = (2S)-2-aminobutanoate + pyruvate. The catalysed reaction is N(omega),N(omega)-dimethyl-L-arginine + pyruvate = 5-(3,3-dimethylguanidino)-2-oxopentanoate + L-alanine. It catalyses the reaction N(omega),N('omega)-dimethyl-L-arginine + pyruvate = 5-(3,3'-dimethylguanidino)-2-oxopentanoate + L-alanine. The enzyme catalyses N(omega),N(omega)-dimethyl-L-arginine + glyoxylate = 5-(3,3-dimethylguanidino)-2-oxopentanoate + glycine. It carries out the reaction N(omega),N('omega)-dimethyl-L-arginine + glyoxylate = 5-(3,3'-dimethylguanidino)-2-oxopentanoate + glycine. The catalysed reaction is N(omega)-methyl-L-arginine + pyruvate = 5-(3-methylguanidino)-2-oxopentanoate + L-alanine. It catalyses the reaction N(omega)-methyl-L-arginine + glyoxylate = 5-(3-methylguanidino)-2-oxopentanoate + glycine. The enzyme catalyses L-ornithine + pyruvate = 5-amino-2-oxopentanoate + L-alanine. It carries out the reaction L-ornithine + glyoxylate = 5-amino-2-oxopentanoate + glycine. The catalysed reaction is (2S)-2-aminobutanoate + glyoxylate = 2-oxobutanoate + glycine. It catalyses the reaction N(omega),N(omega)-dimethyl-L-arginine + oxaloacetate = 5-(3,3-dimethylguanidino)-2-oxopentanoate + L-aspartate. The enzyme catalyses oxaloacetate + L-alanine = L-aspartate + pyruvate. It carries out the reaction N(omega),N(omega)-dimethyl-L-arginine + 2-oxobutanoate = 5-(3,3-dimethylguanidino)-2-oxopentanoate + (2S)-2-aminobutanoate. The catalysed reaction is 2-oxopentanoate + N(omega),N(omega)-dimethyl-L-arginine = 5-(3,3-dimethylguanidino)-2-oxopentanoate + L-2-aminopentanoate. It catalyses the reaction 2-oxohexanoate + N(omega),N(omega)-dimethyl-L-arginine = L-2-aminohexanoate + 5-(3,3-dimethylguanidino)-2-oxopentanoate. Functionally, multifunctional aminotransferase with a broad substrate specificity. Catalyzes the conversion of glyoxylate to glycine using alanine as the amino donor. Catalyzes metabolism of not L- but the D-isomer of D-beta-aminoisobutyric acid to generate 2-methyl-3-oxopropanoate and alanine. Catalyzes the transfer of the amino group from beta-alanine to pyruvate to yield L-alanine and 3-oxopropanoate. Can metabolize NG-monomethyl-L-arginine (NMMA), asymmetric NG,NG-dimethyl-L-arginine (ADMA) and symmetric NG,N'G-dimethyl-L-arginine (SDMA). ADMA is a potent inhibitor of nitric-oxide (NO) synthase, and this activity provides mechanism through which the kidney regulates blood pressure. This Homo sapiens (Human) protein is Alanine--glyoxylate aminotransferase 2, mitochondrial (AGXT2).